The following is a 160-amino-acid chain: MKLQVLPLSQEAFSAYGDVIETQQRDFFHINNGLVERYHDLALVEILEQDCTLISINRAQPANLPLTIHELERHPLGTQAFIPMKGEVFVVVVALGDDKPDLSTLRAFITNGEQGVNYHRNVWHHPLFAWQRVTDFLTIDRGGSDNCDVESIPEQELCFA.

The protein belongs to the ureidoglycolate lyase family. Homodimer. It depends on Ni(2+) as a cofactor.

The catalysed reaction is (S)-ureidoglycolate = urea + glyoxylate. It participates in nitrogen metabolism; (S)-allantoin degradation. Its function is as follows. Catalyzes the catabolism of the allantoin degradation intermediate (S)-ureidoglycolate, generating urea and glyoxylate. Involved in the anaerobic utilization of allantoin as sole nitrogen source. Reinforces the induction of genes involved in the degradation of allantoin and glyoxylate by producing glyoxylate. The polypeptide is Ureidoglycolate lyase (Escherichia coli (strain K12 / MC4100 / BW2952)).